A 478-amino-acid polypeptide reads, in one-letter code: Solute carrier family 49 member 4 (478 aa).

Residues Met-1–Thr-27 form a disordered region. The Cytoplasmic portion of the chain corresponds to Met-1 to Arg-51. Positions Leu-15–Leu-16 match the Di-leucine motif; mediates lysosomal localization motif. Residues Trp-52–Trp-72 traverse the membrane as a helical segment. The Lumenal segment spans residues Gly-73 to Asp-89. The chain crosses the membrane as a helical span at residues Ile-90–Leu-110. Topologically, residues Leu-111–Arg-117 are cytoplasmic. A helical transmembrane segment spans residues Ile-118–Val-138. The Lumenal portion of the chain corresponds to Ser-139–Gln-152. Residues Ile-153–Trp-173 form a helical membrane-spanning segment. The Cytoplasmic portion of the chain corresponds to Phe-174–Ala-184. Residues Ile-185 to Val-205 traverse the membrane as a helical segment. Residues Pro-206–Glu-229 lie on the Lumenal side of the membrane. Asn-209 is a glycosylation site (N-linked (GlcNAc...) asparagine). The helical transmembrane segment at Thr-230 to Phe-250 threads the bilayer. Residues Pro-251–Arg-281 are Cytoplasmic-facing. Residues Phe-282 to Val-302 traverse the membrane as a helical segment. Residues Leu-303–Gln-314 are Lumenal-facing. Residues Val-315–Met-335 form a helical membrane-spanning segment. At Ala-336 to Lys-347 the chain is on the cytoplasmic side. A helical transmembrane segment spans residues Leu-348 to Cys-368. The Lumenal segment spans residues Leu-369 to Ala-384. The helical transmembrane segment at Ser-385–Val-405 threads the bilayer. Residues Glu-406–Gly-414 are Cytoplasmic-facing. The helical transmembrane segment at Ile-415–Val-435 threads the bilayer. Topologically, residues Thr-436 to Leu-442 are lumenal. Residues Ser-443 to Phe-463 form a helical membrane-spanning segment. Over Arg-464–Val-478 the chain is Cytoplasmic.

This sequence belongs to the major facilitator superfamily. Post-translationally, cleaved in lysosomes by cathepsin L between Leu-214 and Ala-261, generating a N-glycosylated N-terminal and a non-glycosylated C-terminal fragment.

Its subcellular location is the lysosome membrane. The catalysed reaction is pyridoxine(out) + n H(+)(out) = pyridoxine(in) + n H(+)(in). In terms of biological role, mediates H(+)-dependent pyridoxine transport. This chain is Solute carrier family 49 member 4 (Slc49a4), found in Rattus norvegicus (Rat).